Here is a 552-residue protein sequence, read N- to C-terminus: HTH-type transcriptional regulator SgrR (552 aa).

The 116-residue stretch at 1-116 (MPSARLQQQF…LVSHLGRSFR (116 aa)) folds into the HTH marR-type domain. A DNA-binding region (H-T-H motif) is located at residues 26–49 (LNELAALLSCSRRHMRTLLNTMQD). Positions 163-492 (ELEADIAHHW…IDWQVDAARW (330 aa)) are solute-binding.

Functionally, activates the small RNA gene sgrS under glucose-phosphate stress conditions as well as yfdZ. Represses its own transcription under both stress and non-stress conditions. Might act as a sensor of the intracellular accumulation of phosphoglucose by binding these molecules in its C-terminal solute-binding domain. This is HTH-type transcriptional regulator SgrR from Escherichia coli O157:H7.